The following is a 392-amino-acid chain: MDKSFILNKTSPRSSARRGQLLTAHGQVETPVFCPVGSQATVKTLTPEDLKSVNVNMILSNTYHLYLRPGIPVVKEMGGLHKFMNWDGVILTDSGGYQIFSLANLRKLDEGGVSFRSHIDGSTRYITPEDAVSFQQDLGSDIAMVLDECPHSEASENEVLAAMERTHQWAKRCLAAHTLKSQHLFAIVQGGLSPVLRQQSAEYLASLDFPGYALGGLSLGEPKDITFETVRHTLRFLPENKPRYLMGVGAPEDLLEGVSCGVDIFDCVLPTRVARNGAFFSRLGRLNIRNASFATQKGPVDPECNCYTCRNYSAAYLHHLFRCEEILAYRLATIHNIAFLSNLMQEVRTSIEKDCFEEFKGDFLTRYQPTNESVRIEQKQKWLSARSGETSS.

Aspartate 93 acts as the Proton acceptor in catalysis. Residues 93–97 (DSGGY), aspartate 147, glutamine 189, and glycine 216 contribute to the substrate site. The interval 247–253 (GVGAPED) is RNA binding. The active-site Nucleophile is aspartate 266. The tract at residues 271–275 (TRVAR) is RNA binding; important for wobble base 34 recognition. Residues cysteine 304, cysteine 306, cysteine 309, and histidine 335 each contribute to the Zn(2+) site.

This sequence belongs to the queuine tRNA-ribosyltransferase family. As to quaternary structure, homodimer. Within each dimer, one monomer is responsible for RNA recognition and catalysis, while the other monomer binds to the replacement base PreQ1. Zn(2+) serves as cofactor.

The enzyme catalyses 7-aminomethyl-7-carbaguanine + guanosine(34) in tRNA = 7-aminomethyl-7-carbaguanosine(34) in tRNA + guanine. Its pathway is tRNA modification; tRNA-queuosine biosynthesis. Its function is as follows. Catalyzes the base-exchange of a guanine (G) residue with the queuine precursor 7-aminomethyl-7-deazaguanine (PreQ1) at position 34 (anticodon wobble position) in tRNAs with GU(N) anticodons (tRNA-Asp, -Asn, -His and -Tyr). Catalysis occurs through a double-displacement mechanism. The nucleophile active site attacks the C1' of nucleotide 34 to detach the guanine base from the RNA, forming a covalent enzyme-RNA intermediate. The proton acceptor active site deprotonates the incoming PreQ1, allowing a nucleophilic attack on the C1' of the ribose to form the product. After dissociation, two additional enzymatic reactions on the tRNA convert PreQ1 to queuine (Q), resulting in the hypermodified nucleoside queuosine (7-(((4,5-cis-dihydroxy-2-cyclopenten-1-yl)amino)methyl)-7-deazaguanosine). The protein is Queuine tRNA-ribosyltransferase of Dehalococcoides mccartyi (strain ATCC BAA-2266 / KCTC 15142 / 195) (Dehalococcoides ethenogenes (strain 195)).